The chain runs to 518 residues: 3-octaprenyl-4-hydroxybenzoate carboxy-lyase (518 aa).

A Mn(2+)-binding site is contributed by asparagine 177. Residues 180–182 (IYR), 194–196 (RWL), and 199–200 (RG) contribute to the prenylated FMN site. Mn(2+) is bound at residue glutamate 243. Aspartate 318 (proton donor) is an active-site residue.

Belongs to the UbiD family. Homohexamer. Requires prenylated FMN as cofactor. Mn(2+) serves as cofactor.

The protein localises to the cell membrane. The enzyme catalyses a 4-hydroxy-3-(all-trans-polyprenyl)benzoate + H(+) = a 2-(all-trans-polyprenyl)phenol + CO2. It participates in cofactor biosynthesis; ubiquinone biosynthesis. Catalyzes the decarboxylation of 3-octaprenyl-4-hydroxy benzoate to 2-octaprenylphenol, an intermediate step in ubiquinone biosynthesis. This Burkholderia multivorans (strain ATCC 17616 / 249) protein is 3-octaprenyl-4-hydroxybenzoate carboxy-lyase.